The sequence spans 83 residues: Mitochondrial import inner membrane translocase subunit Tim8 (83 aa).

The Twin CX3C motif motif lies at 35–60; the sequence is CWDVCFSDYRPPSKMDGKTQTCIQNC. Intrachain disulfides connect Cys35–Cys60 and Cys39–Cys56.

The protein belongs to the small Tim family. Heterohexamer; composed of 3 copies of ddp-1/tim-8 and 3 copies of tin-13/tim-13, named soluble 70 kDa complex. Associates with the TIM22 complex, whose core is composed of tim-22.

The protein localises to the mitochondrion inner membrane. Its function is as follows. Mitochondrial intermembrane chaperone that participates in the import and insertion of some multi-pass transmembrane proteins into the mitochondrial inner membrane. Also required for the transfer of beta-barrel precursors from the TOM complex to the sorting and assembly machinery (SAM complex) of the outer membrane. Acts as a chaperone-like protein that protects the hydrophobic precursors from aggregation and guide them through the mitochondrial intermembrane space. The ddp-1/tim-8-tim-13 complex mediates the import of some proteins while the predominant tim-9/tin-9.1-tim-10/tin-10 70 kDa complex mediates the import of much more proteins. The chain is Mitochondrial import inner membrane translocase subunit Tim8 from Caenorhabditis briggsae.